Here is a 1309-residue protein sequence, read N- to C-terminus: Angiotensin-converting enzyme (1309 aa).

Residues Met-1–Ala-33 form the signal peptide. The Extracellular segment spans residues Leu-34–Arg-1259. N-linked (GlcNAc...) asparagine glycosylation is found at Asn-42, Asn-58, Asn-78, Asn-115, Asn-135, Asn-150, and Asn-164. Peptidase M2 domains are found at residues Thr-44–Pro-627 and Val-646–Pro-1225. Cys-161 and Cys-169 are joined by a disulfide. Tyr-235 contacts chloride. An N-linked (GlcNAc...) asparagine glycan is attached at Asn-322. Cys-363 and Cys-381 are joined by a disulfide. His-394 is a Zn(2+) binding site. The active-site Proton acceptor 1 is the Glu-395. His-398 and Glu-422 together coordinate Zn(2+). Asn-512 is a glycosylation site (N-linked (GlcNAc...) asparagine). His-523 serves as the catalytic Proton donor 1. A glycan (N-linked (GlcNAc...) asparagine) is linked at Asn-526. Arg-532 provides a ligand contact to chloride. Cysteines 548 and 560 form a disulfide. N-linked (GlcNAc...) asparagine glycans are attached at residues Asn-680, Asn-698, Asn-717, and Asn-763. Cysteines 760 and 766 form a disulfide. 2 residues coordinate chloride: Arg-794 and Tyr-832. Asn-945 carries N-linked (GlcNAc...) asparagine glycosylation. Cysteines 960 and 978 form a disulfide. His-991 contacts Zn(2+). Residue Glu-992 is the Proton acceptor 2 of the active site. Zn(2+) is bound by residues His-995 and Glu-1019. Residues Trp-1093 and Arg-1097 each contribute to the chloride site. Catalysis depends on His-1121, which acts as the Proton donor 2. Arg-1130 is a chloride binding site. Cys-1146 and Cys-1158 form a disulfide bridge. Residues Asn-1194 and Asn-1228 are each glycosylated (N-linked (GlcNAc...) asparagine). Positions His-1218–Arg-1259 are juxtamembrane stalk. Residues Val-1260–Thr-1280 form a helical membrane-spanning segment. The Cytoplasmic portion of the chain corresponds to Gln-1281–Ser-1309. Ser-1302 bears the Phosphoserine mark.

Belongs to the peptidase M2 family. As to quaternary structure, monomer and homodimer; homodimerizes following binding to an inhibitor. Interacts with calmodulin (CALM1, CALM2 or CALM3); interaction takes place in the cytoplasmic region and regulates phosphorylation and proteolytic cleavage. It depends on Zn(2+) as a cofactor. Requires chloride as cofactor. Produced following proteolytic cleavage by secretase enzymes that cleave the transmembrane form in the juxtamembrane stalk region upstream of the transmembrane region. Cleavage can take place at different sites of the juxtamembrane stalk region. Post-translationally, phosphorylated by CK2 on Ser-1302; which allows membrane retention. Phosphorylated on tyrosine residues on its extracellular part, promoting cleavage by secretase enzymes and formation of the soluble form (Angiotensin-converting enzyme, soluble form).

The protein localises to the cell membrane. The protein resides in the cytoplasm. It is found in the secreted. The catalysed reaction is Release of a C-terminal dipeptide, oligopeptide-|-Xaa-Yaa, when Xaa is not Pro, and Yaa is neither Asp nor Glu. Thus, conversion of angiotensin I to angiotensin II, with increase in vasoconstrictor activity, but no action on angiotensin II.. The enzyme catalyses angiotensin I + H2O = L-histidyl-L-leucine + angiotensin II. It carries out the reaction bradykinin + H2O = L-Phe-L-Arg + bradykinin(1-7). It catalyses the reaction substance P + H2O = substance P(1-9) + L-Leu-L-Met-NH2. The catalysed reaction is substance P + H2O = substance P(1-8) + Gly-L-Leu-L-Met-NH2. The enzyme catalyses substance P + H2O = L-Phe-L-Phe-Gly-L-Leu-L-Met-NH2 + substance P(1-6). It carries out the reaction neurotensin + H2O = neurotensin(1-11) + L-isoleucyl-L-leucine. It catalyses the reaction goralatide + H2O = N-acetyl-L-seryl-L-aspartate + L-lysyl-L-proline. The catalysed reaction is Met-enkephalin + H2O = L-phenylalanyl-L-methionine + L-tyrosylglycylglycine. The enzyme catalyses Leu-enkephalin + H2O = L-tyrosylglycylglycine + L-phenylalanyl-L-leucine. It carries out the reaction Met-enkephalin-Arg-Phe + H2O = L-arginyl-L-phenylalanine + Met-enkephalin. The dipeptidyl carboxypeptidase activity is strongly activated by chloride. The dipeptidyl carboxypeptidase activity is specifically inhibited by lisinopril, captopril and enalaprilat. In terms of biological role, dipeptidyl carboxypeptidase that removes dipeptides from the C-terminus of a variety of circulating hormones, such as angiotensin I, bradykinin or enkephalins, thereby playing a key role in the regulation of blood pressure, electrolyte homeostasis or synaptic plasticity. Composed of two similar catalytic domains, each possessing a functional active site, with different selectivity for substrates. Plays a major role in the angiotensin-renin system that regulates blood pressure and sodium retention by the kidney by converting angiotensin I to angiotensin II, resulting in an increase of the vasoconstrictor activity of angiotensin. Also able to inactivate bradykinin, a potent vasodilator, and therefore enhance the blood pressure response. Acts as a regulator of synaptic transmission by mediating cleavage of neuropeptide hormones, such as substance P, neurotensin or enkephalins. Catalyzes degradation of different enkephalin neuropeptides (Met-enkephalin, Leu-enkephalin, Met-enkephalin-Arg-Phe and possibly Met-enkephalin-Arg-Gly-Leu). Acts as a regulator of synaptic plasticity in the nucleus accumbens of the brain by mediating cleavage of Met-enkephalin-Arg-Phe, a strong ligand of Mu-type opioid receptor OPRM1, into Met-enkephalin. Met-enkephalin-Arg-Phe cleavage by ACE decreases activation of OPRM1, leading to long-term synaptic potentiation of glutamate release. Also acts as a regulator of hematopoietic stem cell differentiation by mediating degradation of hemoregulatory peptide N-acetyl-SDKP (AcSDKP). Acts as a regulator of cannabinoid signaling pathway by mediating degradation of hemopressin, an antagonist peptide of the cannabinoid receptor CNR1. Involved in amyloid-beta metabolism by catalyzing degradation of Amyloid-beta protein 40 and Amyloid-beta protein 42 peptides, thereby preventing plaque formation. Catalyzes cleavage of cholecystokinin (maturation of Cholecystokinin-8 and Cholecystokinin-5) and Gonadoliberin-1 (both maturation and degradation) hormones. Degradation of hemoregulatory peptide N-acetyl-SDKP (AcSDKP) and amyloid-beta proteins is mediated by the N-terminal catalytic domain, while angiotensin I and cholecystokinin cleavage is mediated by the C-terminal catalytic region. Soluble form that is released in blood plasma and other body fluids following proteolytic cleavage in the juxtamembrane stalk region. The sequence is that of Angiotensin-converting enzyme from Sus scrofa (Pig).